The chain runs to 166 residues: RNA pyrophosphohydrolase (166 aa).

In terms of domain architecture, Nudix hydrolase spans 6-149; it reads GFRPNVGIIL…KRDVYRKAMM (144 aa). Positions 38–59 match the Nudix box motif; the sequence is GGIHFGETPEQALYRELREEVG.

It belongs to the Nudix hydrolase family. RppH subfamily. The cofactor is a divalent metal cation.

Accelerates the degradation of transcripts by removing pyrophosphate from the 5'-end of triphosphorylated RNA, leading to a more labile monophosphorylated state that can stimulate subsequent ribonuclease cleavage. This is RNA pyrophosphohydrolase from Acinetobacter baylyi (strain ATCC 33305 / BD413 / ADP1).